The following is a 680-amino-acid chain: Putative cyclin-dependent serine/threonine-protein kinase DDB_G0272797/DDB_G0274007 (680 aa).

A Protein kinase domain is found at 4–381 (YIILSKCGQG…SLEALEHPWF (378 aa)). Residues 10-18 (CGQGTYGSV) and Lys33 each bind ATP. The active-site Proton acceptor is the Asp125. Disordered stretches follow at residues 243–299 (QQQQ…LQSP), 409–444 (RQLQ…QRQH), 483–507 (LAQH…QHQQ), and 597–680 (QQQQ…KSNG). Residues 257-286 (NNNNNNNNNNNNNNNNNNNNNNNNNNNNNN) are compositionally biased toward low complexity. Over residues 287 to 297 (KYNNISTSCLQ) the composition is skewed to polar residues. Composition is skewed to low complexity over residues 410–444 (QLQQ…QRQH), 483–494 (LAQHQQYNSQQH), and 597–616 (QQQQ…PPQH). Residues 617–631 (QHQHQHQHQHQHQHQ) are compositionally biased toward basic residues. Residues 632–642 (HQPQPQHQHQP) show a composition bias toward low complexity. Over residues 643-655 (QPQPQPTPTPTPT) the composition is skewed to pro residues. Residues 656 to 680 (STPTTTTIPPTITTTIQPTISKSNG) show a composition bias toward low complexity.

Belongs to the protein kinase superfamily. CMGC Ser/Thr protein kinase family. CDC2/CDKX subfamily.

It catalyses the reaction L-seryl-[protein] + ATP = O-phospho-L-seryl-[protein] + ADP + H(+). The catalysed reaction is L-threonyl-[protein] + ATP = O-phospho-L-threonyl-[protein] + ADP + H(+). The protein is Putative cyclin-dependent serine/threonine-protein kinase DDB_G0272797/DDB_G0274007 of Dictyostelium discoideum (Social amoeba).